We begin with the raw amino-acid sequence, 507 residues long: Protein disulfide-isomerase (507 aa).

A signal peptide spans 1 to 20 (MASMVSFCFLLLFLAFFASS). In terms of domain architecture, Thioredoxin 1 spans 21–144 (FNEIYAEESE…IVDYLKKQSG (124 aa)). Active-site nucleophile residues include C62 and C65. C62 and C65 are disulfide-bonded. Residues N181 and N278 are each glycosylated (N-linked (GlcNAc...) asparagine). Residues 365–485 (YRKSEPIPEH…FIEFIEKNRE (121 aa)) form the Thioredoxin 2 domain. Catalysis depends on nucleophile residues C407 and C410. A disulfide bridge connects residues C407 and C410. A disordered region spans residues 484 to 507 (REKSSKKESIVKDDQTDSETKAEL). Positions 504-507 (KAEL) match the Prevents secretion from ER motif.

The protein belongs to the protein disulfide isomerase family.

It localises to the endoplasmic reticulum lumen. The enzyme catalyses Catalyzes the rearrangement of -S-S- bonds in proteins.. In terms of biological role, participates in the folding of proteins containing disulfide bonds, may be involved in glycosylation, prolyl hydroxylation and triglyceride transfer. The polypeptide is Protein disulfide-isomerase (PDI) (Datisca glomerata (Durango root)).